The following is a 468-amino-acid chain: Adenosylhomocysteinase (468 aa).

Substrate is bound by residues Thr-57, Asp-132, and Glu-194. Position 195-197 (195-197 (TTT)) interacts with NAD(+). Substrate is bound by residues Lys-224 and Asp-228. NAD(+) is bound by residues Asn-229, 258–263 (GFGDVG), Glu-281, Asn-316, 337–339 (IGH), and Asn-382.

The protein belongs to the adenosylhomocysteinase family. The cofactor is NAD(+).

It localises to the cytoplasm. It catalyses the reaction S-adenosyl-L-homocysteine + H2O = L-homocysteine + adenosine. It participates in amino-acid biosynthesis; L-homocysteine biosynthesis; L-homocysteine from S-adenosyl-L-homocysteine: step 1/1. May play a key role in the regulation of the intracellular concentration of adenosylhomocysteine. The chain is Adenosylhomocysteinase from Methylobacterium sp. (strain 4-46).